A 143-amino-acid chain; its full sequence is Large ribosomal subunit protein uL11 (143 aa).

Belongs to the universal ribosomal protein uL11 family. As to quaternary structure, part of the ribosomal stalk of the 50S ribosomal subunit. Interacts with L10 and the large rRNA to form the base of the stalk. L10 forms an elongated spine to which L12 dimers bind in a sequential fashion forming a multimeric L10(L12)X complex. One or more lysine residues are methylated.

Forms part of the ribosomal stalk which helps the ribosome interact with GTP-bound translation factors. This Rhizobium etli (strain CIAT 652) protein is Large ribosomal subunit protein uL11.